The sequence spans 394 residues: Elongation factor Tu 1 (394 aa).

The tr-type G domain maps to 10 to 204 (KPHVNVGTIG…ALDTYIPEPA (195 aa)). The interval 19 to 26 (GHVDHGKT) is G1. Residue 19–26 (GHVDHGKT) participates in GTP binding. Threonine 26 lines the Mg(2+) pocket. The segment at 60 to 64 (GITIN) is G2. The interval 81–84 (DCPG) is G3. GTP contacts are provided by residues 81 to 85 (DCPGH) and 136 to 139 (NKCD). The segment at 136–139 (NKCD) is G4. The segment at 174 to 176 (SAL) is G5.

It belongs to the TRAFAC class translation factor GTPase superfamily. Classic translation factor GTPase family. EF-Tu/EF-1A subfamily. Monomer.

It is found in the cytoplasm. The enzyme catalyses GTP + H2O = GDP + phosphate + H(+). Functionally, GTP hydrolase that promotes the GTP-dependent binding of aminoacyl-tRNA to the A-site of ribosomes during protein biosynthesis. This Shewanella frigidimarina (strain NCIMB 400) protein is Elongation factor Tu 1.